Reading from the N-terminus, the 377-residue chain is Prostaglandin reductase-3 (377 aa).

K35 carries the post-translational modification N6-acetyllysine. Residues T185, S205, K209, Y224, S247, I269, and Y275 each contribute to the NADP(+) site. At S299 the chain carries Phosphoserine. NADP(+) contacts are provided by residues 303 to 305 and N361; that span reads FFL.

Belongs to the zinc-containing alcohol dehydrogenase family. Quinone oxidoreductase subfamily. Widely expressed.

The protein resides in the peroxisome. It carries out the reaction 13,14-dihydro-15-oxo-prostaglandin E2 + NADP(+) = 15-oxoprostaglandin E2 + NADPH + H(+). The catalysed reaction is 13,14-dihydro-15-oxo-prostaglandin E1 + NADP(+) = 15-oxoprostaglandin E1 + NADPH + H(+). It catalyses the reaction 13,14-dihydro-15-oxo-PGF2alpha + NADP(+) = 15-oxoprostaglandin F2alpha + NADPH + H(+). The enzyme catalyses 13,14-dihydro-15-oxo-prostaglandin F1alpha + NADP(+) = 15-oxoprostaglandin F1alpha + NADPH + H(+). In terms of biological role, functions as 15-oxo-prostaglandin 13-reductase and acts on 15-keto-PGE1, 15-keto-PGE2, 15-keto-PGE1-alpha and 15-keto-PGE2-alpha with highest efficiency towards 15-keto-PGE2-alpha. Overexpression represses transcriptional activity of PPARG and inhibits adipocyte differentiation. In Mus musculus (Mouse), this protein is Prostaglandin reductase-3.